We begin with the raw amino-acid sequence, 105 residues long: Defensin-like protein (105 aa).

A signal peptide spans 1-25 (MARSLCFMAFAILAMMLFVAYEVQA). Intrachain disulfides connect C28–C72, C39–C59, C45–C66, and C49–C68.

Belongs to the DEFL family. As to expression, flower. Found in petals, stamen and pistils, but not in sepals. In particular, accumulation in a configuration surrounding the inner reproductive whorls.

Its subcellular location is the secreted. It is found in the cell wall. The protein resides in the vacuole. Its function is as follows. Involved in floral organogenesis. May play a protective role in flowers by protecting the reproductive organs from potential pathogen attack. The polypeptide is Defensin-like protein (FST) (Nicotiana tabacum (Common tobacco)).